The sequence spans 421 residues: Histidine--tRNA ligase (421 aa).

It belongs to the class-II aminoacyl-tRNA synthetase family. In terms of assembly, homodimer.

It localises to the cytoplasm. It catalyses the reaction tRNA(His) + L-histidine + ATP = L-histidyl-tRNA(His) + AMP + diphosphate + H(+). The chain is Histidine--tRNA ligase from Coxiella burnetii (strain Dugway 5J108-111).